A 142-amino-acid chain; its full sequence is Acidic phospholipase A2 Bc-PL (142 aa).

An N-terminal signal peptide occupies residues 1-9 (AVCVSLLGA). A propeptide spanning residues 10–17 (ANIPPQPL) is cleaved from the precursor. Intrachain disulfides connect Cys-28–Cys-94, Cys-44–Cys-141, Cys-46–Cys-62, Cys-61–Cys-122, Cys-68–Cys-115, Cys-78–Cys-108, and Cys-101–Cys-113. Residues Tyr-45, Gly-47, and Gly-49 each contribute to the Ca(2+) site. His-65 is a catalytic residue. Asp-66 lines the Ca(2+) pocket. Residue Asp-116 is part of the active site.

It belongs to the phospholipase A2 family. Group I subfamily. D49 sub-subfamily. The cofactor is Ca(2+). Expressed by the venom gland.

It is found in the secreted. It carries out the reaction a 1,2-diacyl-sn-glycero-3-phosphocholine + H2O = a 1-acyl-sn-glycero-3-phosphocholine + a fatty acid + H(+). Its function is as follows. PLA2 catalyzes the calcium-dependent hydrolysis of the 2-acyl groups in 3-sn-phosphoglycerides. The chain is Acidic phospholipase A2 Bc-PL from Bungarus candidus (Malayan krait).